A 306-amino-acid polypeptide reads, in one-letter code: MELKDYYAIMGVKPTDDLKTIKTAYRRLARKYHPDVSKEPDAEARFKEVAEAWEVLSDEQRRAEYDQMWQHRNDPQFSRQFQHGDGQSFNAEDFDDIFSSIFGQHARQSRQRPAARGHDIEIEVAVFLEETLTEHKRTISYNLPVYNAFGMIEQEIPKTLNVKIPAGVGNGQRIRLKGQGTPGENGGPNGDLWLVIHIAPHPLFDIVGQDLEIVVPVSPWEAALGAKVTVPTLKESILLTIPPGSQAGQRLRVKGKGLVSKKQTGDLYAVLKIVMPPKPDENTAALWQQLADAQSSFDPRKDWGKA.

The J domain occupies 5–69 (DYYAIMGVKP…QRRAEYDQMW (65 aa)).

The protein resides in the cytoplasm. Its subcellular location is the nucleoid. Functionally, DNA-binding protein that preferentially recognizes a curved DNA sequence. It is probably a functional analog of DnaJ; displays overlapping activities with DnaJ, but functions under different conditions, probably acting as a molecular chaperone in an adaptive response to environmental stresses other than heat shock. Lacks autonomous chaperone activity; binds native substrates and targets them for recognition by DnaK. Its activity is inhibited by the binding of CbpM. The sequence is that of Curved DNA-binding protein from Escherichia coli O157:H7.